The chain runs to 333 residues: Glycerol-3-phosphate dehydrogenase [NAD(P)+] (333 aa).

NADPH is bound by residues S10, W11, and K105. Residues K105, G136, and T138 each contribute to the sn-glycerol 3-phosphate site. A140 contributes to the NADPH binding site. K191, D244, S254, R255, and N256 together coordinate sn-glycerol 3-phosphate. K191 functions as the Proton acceptor in the catalytic mechanism. R255 lines the NADPH pocket. V279 and E281 together coordinate NADPH.

The protein belongs to the NAD-dependent glycerol-3-phosphate dehydrogenase family.

It is found in the cytoplasm. It carries out the reaction sn-glycerol 3-phosphate + NAD(+) = dihydroxyacetone phosphate + NADH + H(+). The enzyme catalyses sn-glycerol 3-phosphate + NADP(+) = dihydroxyacetone phosphate + NADPH + H(+). It participates in membrane lipid metabolism; glycerophospholipid metabolism. Its function is as follows. Catalyzes the reduction of the glycolytic intermediate dihydroxyacetone phosphate (DHAP) to sn-glycerol 3-phosphate (G3P), the key precursor for phospholipid synthesis. The sequence is that of Glycerol-3-phosphate dehydrogenase [NAD(P)+] from Syntrophotalea carbinolica (strain DSM 2380 / NBRC 103641 / GraBd1) (Pelobacter carbinolicus).